A 279-amino-acid chain; its full sequence is RNases MRP/P 32.9 kDa subunit (279 aa).

Serine 64 carries the post-translational modification Phosphoserine.

It belongs to the eukaryotic/archaeal RNase P protein component 1 family. Component of nuclear RNase P and RNase MRP complexes. RNase P consists of an RNA moiety and at least 9 protein subunits including POP1, POP3, POP4, POP5, POP6, POP7, POP8, RPP1 and RPR2. RNase MRP complex consists of an RNA moiety and at least 10 protein subunits including POP1, POP3, POP4, POP5, POP6, POP7, POP8, RMP1, RPP1 and SNM1, many of which are shared with the RNase P complex.

The protein localises to the nucleus. Its function is as follows. Required for 5.8S rRNA and tRNA processing; associated with RNase MRP and RNase P. In Saccharomyces cerevisiae (strain ATCC 204508 / S288c) (Baker's yeast), this protein is RNases MRP/P 32.9 kDa subunit (POP4).